We begin with the raw amino-acid sequence, 309 residues long: Taste receptor type 2 member 43 (309 aa).

Residue M1 is a topological domain, extracellular. Residues 2–22 (ITFLPIIFSSLVVVTFVIGNF) traverse the membrane as a helical segment. Residues 23 to 46 (ANGFIALVNSIEWFKRQKISFADQ) are Cytoplasmic-facing. The chain crosses the membrane as a helical span at residues 47–67 (ILTALAVSRVGLLWVLLLNWY). The Extracellular portion of the chain corresponds to 68–86 (STVLNPAFNSVEVRTTAYN). A helical membrane pass occupies residues 87–107 (IWAVINHFSNWLATSLSIFYL). The Cytoplasmic portion of the chain corresponds to 108-126 (LKIANFSNFIFLHLKRRVK). Residues 127-147 (SVILVMLLGPLLFLACHLFVI) traverse the membrane as a helical segment. The Extracellular portion of the chain corresponds to 148–178 (NMNEIVRTKEFEGNMTWKIKLKSAMYFSNMT). Residues N161 and N176 are each glycosylated (N-linked (GlcNAc...) asparagine). A helical transmembrane segment spans residues 179 to 199 (VTMVANLVPFTLTLLSFLLLI). Residues 200-229 (CSLCKHLKKMQLHGKGSQDPSTKVHIKVLQ) lie on the Cytoplasmic side of the membrane. The chain crosses the membrane as a helical span at residues 230–250 (TVISFLLLCAIYFLSIMISVW). Topologically, residues 251 to 259 (SFGSLKNKP) are extracellular. The helical transmembrane segment at 260–280 (VFMFCKAMRFSYPSIHPFILI) threads the bilayer. Over 281–309 (WGNKKLKQTFLSVFWQMRYWVKGEKTSSP) the chain is Cytoplasmic.

The protein belongs to the G-protein coupled receptor T2R family.

The protein resides in the membrane. It localises to the cell projection. Its subcellular location is the cilium membrane. In terms of biological role, gustducin-coupled receptor immplicated in the perception of bitter compounds in the oral cavity and the gastrointestinal tract. Signals through PLCB2 and the calcium-regulated cation channel TRPM5. Activated by the sulfonyl amide sweeteners saccharin and acesulfame K. In airway epithelial cells, binding of bitter compounds increases the intracellular calcium ion concentration and stimulates ciliary beat frequency. May act as chemosensory receptors in airway epithelial cells to detect and eliminate potential noxious agents from the airways. The chain is Taste receptor type 2 member 43 (TAS2R43) from Pan troglodytes (Chimpanzee).